Here is a 431-residue protein sequence, read N- to C-terminus: Glutamate-1-semialdehyde 2,1-aminomutase (431 aa).

Residue K269 is modified to N6-(pyridoxal phosphate)lysine.

Belongs to the class-III pyridoxal-phosphate-dependent aminotransferase family. HemL subfamily. In terms of assembly, homodimer. The cofactor is pyridoxal 5'-phosphate.

It is found in the cytoplasm. The catalysed reaction is (S)-4-amino-5-oxopentanoate = 5-aminolevulinate. It functions in the pathway porphyrin-containing compound metabolism; protoporphyrin-IX biosynthesis; 5-aminolevulinate from L-glutamyl-tRNA(Glu): step 2/2. The sequence is that of Glutamate-1-semialdehyde 2,1-aminomutase from Tolumonas auensis (strain DSM 9187 / NBRC 110442 / TA 4).